The primary structure comprises 149 residues: Calmodulin-5/6/7/8 (149 aa).

Alanine 2 carries the post-translational modification N-acetylalanine. 4 EF-hand domains span residues 8 to 43 (DQIS…LGQN), 44 to 79 (PTEA…KMKD), 81 to 116 (DSEE…LGEK), and 117 to 149 (LTDE…MMAK). Positions 21, 23, 25, 27, 32, 57, 59, 61, 63, 68, 94, 96, 98, and 105 each coordinate Ca(2+). An N6,N6,N6-trimethyllysine modification is found at lysine 116. Ca(2+)-binding residues include aspartate 130, aspartate 132, aspartate 134, glutamine 136, and glutamate 141.

This sequence belongs to the calmodulin family. As to expression, high expression of PCM5 and 8 in stolon tips and stems, moderate in roots, and low in leaves. Steady-state expression of PCM6 in all the tissues tested, except in the leaves where the expression is lower.

Functionally, calmodulin mediates the control of a large number of enzymes, ion channels and other proteins by Ca(2+). Among the enzymes to be stimulated by the calmodulin-Ca(2+) complex are a number of protein kinases and phosphatases. The polypeptide is Calmodulin-5/6/7/8 (PCM5) (Solanum tuberosum (Potato)).